The following is a 167-amino-acid chain: Biogenesis of lysosome-related organelles complex 1 subunit 6 (167 aa).

Polar residues predominate over residues 1–11; the sequence is MLKSSNINSVL. Residues 1–38 form a disordered region; that stretch reads MLKSSNINSVLNELPNDPARDSTAQSSHNGKPKQDAET. Residues 102–160 are a coiled coil; it reads ARLNDMMSDVKRYKDKLTKIKKEMQGVYQRTKELKKRAANVAACKQRDYQRKLERLQHE.

It belongs to the BLOC1S6 family. In terms of assembly, component of the biogenesis of lysosome-related organelles complex-1 (BLOC-1) composed of Blos1, Blos2, Blos3, Blos4, Dysb, Muted, Pldn and Snapin. Interacts with Blos1, Blos4 and Dysb.

The protein localises to the synapse. Its subcellular location is the cytoplasm. It is found in the cytoskeleton. The protein resides in the myofibril. It localises to the sarcomere. The protein localises to the z line. Its function is as follows. Component of the biogenesis of lysosome-related organelles complex-1 (BLOC-1) involved in pigment granule biogenesis and membrane trafficking in synapses. In response to high synaptic activity at neuromuscular junctions, plays a key role in promoting efficient synaptic vesicle recycling and re-formation through early endosomes. The protein is Biogenesis of lysosome-related organelles complex 1 subunit 6 of Drosophila melanogaster (Fruit fly).